Reading from the N-terminus, the 327-residue chain is Lactosylceramide 4-alpha-galactosyltransferase (327 aa).

The DXD motif signature appears at 166-168; sequence DTD.

Belongs to the glycosyltransferase 32 family.

The protein localises to the golgi apparatus membrane. The catalysed reaction is a beta-D-Gal-(1-&gt;4)-beta-D-Glc-(1&lt;-&gt;1)-Cer(d18:1(4E)) + UDP-alpha-D-galactose = a globoside Gb3Cer (d18:1(4E)) + UDP + H(+). It carries out the reaction a beta-D-Gal-(1&lt;-&gt;1')-ceramide + UDP-alpha-D-galactose = alpha-D-Gal-(1-&gt;4)-beta-D-Gal-(1&lt;-&gt;1')-Cer + UDP + H(+). It functions in the pathway glycolipid biosynthesis. Functionally, catalyzes the transfer of galactose from UDP-alpha-D-galactose to lactosylceramide/beta-D-galactosyl-(1-&gt;4)-beta-D-glucosyl-(1&lt;-&gt;1)-ceramide(d18:1(4E)) to produce globotriaosylceramide/globoside Gb3Cer (d18:1(4E)). Also able to transfer galactose to galactosylceramide/beta-D-Gal-(1&lt;-&gt;1')-Cer. Globoside Gb3Cer is a glycosphingolipid of the globo serie, one of the major types of neutral root structures of glycosphingolipids, that constitute a significant portion of mammalian cell membranes. In Gorilla gorilla gorilla (Western lowland gorilla), this protein is Lactosylceramide 4-alpha-galactosyltransferase (A4GALT).